The following is a 262-amino-acid chain: Tryptophan synthase alpha chain (262 aa).

Residues glutamate 49 and aspartate 60 each act as proton acceptor in the active site.

It belongs to the TrpA family. In terms of assembly, tetramer of two alpha and two beta chains.

The enzyme catalyses (1S,2R)-1-C-(indol-3-yl)glycerol 3-phosphate + L-serine = D-glyceraldehyde 3-phosphate + L-tryptophan + H2O. Its pathway is amino-acid biosynthesis; L-tryptophan biosynthesis; L-tryptophan from chorismate: step 5/5. The alpha subunit is responsible for the aldol cleavage of indoleglycerol phosphate to indole and glyceraldehyde 3-phosphate. The protein is Tryptophan synthase alpha chain of Thermoanaerobacter sp. (strain X514).